Reading from the N-terminus, the 148-residue chain is Cytochrome c-552 (148 aa).

Positions 1 to 17 (MKRTLMAFLLLGGLALA) are cleaved as a signal peptide. Pyrrolidone carboxylic acid is present on glutamine 18. Residues cysteine 28, cysteine 31, histidine 32, and methionine 86 each coordinate heme c.

Post-translationally, binds 1 heme c group covalently per subunit.

Functionally, this monoheme basic protein appears to function as an electron donor to cytochrome oxidase in T.thermophilus. The chain is Cytochrome c-552 (cycA) from Thermus thermophilus (strain ATCC 27634 / DSM 579 / HB8).